Here is a 65-residue protein sequence, read N- to C-terminus: Small ribosomal subunit protein bS21 (65 aa).

Positions 43 to 52 (EKKRVKEALA) are enriched in basic and acidic residues. Residues 43-65 (EKKRVKEALARKRSRKKARKEQD) form a disordered region. Residues 53-65 (RKRSRKKARKEQD) show a composition bias toward basic residues.

The protein belongs to the bacterial ribosomal protein bS21 family.

This Koribacter versatilis (strain Ellin345) protein is Small ribosomal subunit protein bS21.